Reading from the N-terminus, the 103-residue chain is uncharacterized protein (103 aa).

The segment at 69-103 (SSISYPGGGGGGGGSAKSLSSSKPGGGGGSPLIFL) is disordered. Gly residues-rich tracts occupy residues 74 to 83 (PGGGGGGGGS) and 92 to 103 (PGGGGGSPLIFL).

This is an uncharacterized protein from Saccharomyces cerevisiae (strain ATCC 204508 / S288c) (Baker's yeast).